The primary structure comprises 335 residues: Methionine import ATP-binding protein MetN 1 (335 aa).

In terms of domain architecture, ABC transporter spans 2-242; that stretch reads IEFHNVHKTY…PQHATTRRFV (241 aa). 38–45 lines the ATP pocket; it reads GHSGAGKS.

This sequence belongs to the ABC transporter superfamily. Methionine importer (TC 3.A.1.24) family. In terms of assembly, the complex is composed of two ATP-binding proteins (MetN), two transmembrane proteins (MetI) and a solute-binding protein (MetQ).

It is found in the cell inner membrane. It catalyses the reaction L-methionine(out) + ATP + H2O = L-methionine(in) + ADP + phosphate + H(+). It carries out the reaction D-methionine(out) + ATP + H2O = D-methionine(in) + ADP + phosphate + H(+). Functionally, part of the ABC transporter complex MetNIQ involved in methionine import. Responsible for energy coupling to the transport system. This Pseudomonas syringae pv. syringae (strain B728a) protein is Methionine import ATP-binding protein MetN 1.